The following is a 736-amino-acid chain: Ethylene receptor 2 (736 aa).

3 helical membrane passes run isoleucine 22–valine 42, valine 53–tryptophan 73, and alanine 94–valine 114. Positions 64 and 68 each coordinate Cu cation. In terms of domain architecture, GAF spans aspartate 157–leucine 305. The Histidine kinase domain maps to valine 348–isoleucine 585. Position 351 is a phosphohistidine; by autocatalysis (histidine 351). Residues lysine 613–leucine 730 form the Response regulatory domain. A 4-aspartylphosphate modification is found at aspartate 661.

The protein belongs to the ethylene receptor family. As to quaternary structure, homodimer; disulfide-linked. Cu cation serves as cofactor. In terms of processing, activation probably requires a transfer of a phosphate group between a His in the transmitter domain and an Asp of the receiver domain. Leaves, flowers and fruits.

It is found in the endoplasmic reticulum membrane. The catalysed reaction is ATP + protein L-histidine = ADP + protein N-phospho-L-histidine.. Functionally, may act early in the ethylene signal transduction pathway, possibly as an ethylene receptor, or as a regulator of the pathway. In Solanum lycopersicum (Tomato), this protein is Ethylene receptor 2 (ETR2).